Consider the following 128-residue polypeptide: MSNNIPAELKYVASHEWLRLEEDGTITVGITHHAQELLGDIVFVELPEVGANLAAEEQAGVVESVKAASDVYAPIAGEVVAVNDDLPSAPETANSDPYGAGWFFKIKPANPADYDGLLTAEQYAGEVD.

The Lipoyl-binding domain occupies 25–107; it reads TITVGITHHA…YGAGWFFKIK (83 aa). Lys-66 is modified (N6-lipoyllysine).

It belongs to the GcvH family. In terms of assembly, the glycine cleavage system is composed of four proteins: P, T, L and H. It depends on (R)-lipoate as a cofactor.

In terms of biological role, the glycine cleavage system catalyzes the degradation of glycine. The H protein shuttles the methylamine group of glycine from the P protein to the T protein. The chain is Glycine cleavage system H protein from Neisseria meningitidis serogroup C (strain 053442).